We begin with the raw amino-acid sequence, 352 residues long: Histidinol-phosphate aminotransferase (352 aa).

K211 is modified (N6-(pyridoxal phosphate)lysine).

Belongs to the class-II pyridoxal-phosphate-dependent aminotransferase family. Histidinol-phosphate aminotransferase subfamily. In terms of assembly, homodimer. Pyridoxal 5'-phosphate serves as cofactor.

The enzyme catalyses L-histidinol phosphate + 2-oxoglutarate = 3-(imidazol-4-yl)-2-oxopropyl phosphate + L-glutamate. The protein operates within amino-acid biosynthesis; L-histidine biosynthesis; L-histidine from 5-phospho-alpha-D-ribose 1-diphosphate: step 7/9. This is Histidinol-phosphate aminotransferase from Haemophilus influenzae (strain PittEE).